The primary structure comprises 387 residues: Formate-dependent phosphoribosylglycinamide formyltransferase (387 aa).

Residues 12–13 and E72 contribute to the N(1)-(5-phospho-beta-D-ribosyl)glycinamide site; that span reads EL. ATP contacts are provided by residues R104, K145, 150–155, 185–188, and E193; these read SSGKGQ and EEFI. Residues 109 to 300 form the ATP-grasp domain; the sequence is DLAARELGLA…EFELHLRAVL (192 aa). Positions 258 and 270 each coordinate Mg(2+). Residues D277, K347, and 354 to 355 each bind N(1)-(5-phospho-beta-D-ribosyl)glycinamide; that span reads RR.

Belongs to the PurK/PurT family. In terms of assembly, homodimer.

The enzyme catalyses N(1)-(5-phospho-beta-D-ribosyl)glycinamide + formate + ATP = N(2)-formyl-N(1)-(5-phospho-beta-D-ribosyl)glycinamide + ADP + phosphate + H(+). Its pathway is purine metabolism; IMP biosynthesis via de novo pathway; N(2)-formyl-N(1)-(5-phospho-D-ribosyl)glycinamide from N(1)-(5-phospho-D-ribosyl)glycinamide (formate route): step 1/1. Its function is as follows. Involved in the de novo purine biosynthesis. Catalyzes the transfer of formate to 5-phospho-ribosyl-glycinamide (GAR), producing 5-phospho-ribosyl-N-formylglycinamide (FGAR). Formate is provided by PurU via hydrolysis of 10-formyl-tetrahydrofolate. In Anaeromyxobacter dehalogenans (strain 2CP-C), this protein is Formate-dependent phosphoribosylglycinamide formyltransferase.